Reading from the N-terminus, the 376-residue chain is Putative endoglucanase type K (376 aa).

An N-terminal signal peptide occupies residues 1 to 18; that stretch reads MRSYTLLALAGPLAVSAA. The segment at 19–308 is catalytic; that stretch reads SGSGHSTRYW…ATKPAQPVNK (290 aa). Aspartate 29 (nucleophile) is an active-site residue. Aspartate 140 acts as the Proton donor in catalysis. Residues 229–332 are disordered; that stretch reads AFKGDTSASK…SCPAKTDATA (104 aa). 2 stretches are compositionally biased toward low complexity: residues 235–258 and 291–306; these read SASKPQPSSSAKKTTSAAAAAQPQ and KPVATKPAATKPAQPV. Positions 309 to 338 are linker; the sequence is PKTTQKVRGTKTRGSCPAKTDATAKASVVP. The region spanning 335 to 374 is the CBM1 domain; it reads SVVPAYYQCGGSKSAYPNGNLACATGSKCVKQNEYYSQCV.

Belongs to the glycosyl hydrolase 45 (cellulase K) family.

It carries out the reaction Endohydrolysis of (1-&gt;4)-beta-D-glucosidic linkages in cellulose, lichenin and cereal beta-D-glucans.. In Fusarium oxysporum (Fusarium vascular wilt), this protein is Putative endoglucanase type K.